A 354-amino-acid polypeptide reads, in one-letter code: Ferredoxin--NADP reductase 2 (354 aa).

FAD contacts are provided by T14, D33, Q41, Y46, A86, F121, D289, and T330.

This sequence belongs to the ferredoxin--NADP reductase type 2 family. Homodimer. FAD serves as cofactor.

It carries out the reaction 2 reduced [2Fe-2S]-[ferredoxin] + NADP(+) + H(+) = 2 oxidized [2Fe-2S]-[ferredoxin] + NADPH. In Christiangramia forsetii (strain DSM 17595 / CGMCC 1.15422 / KT0803) (Gramella forsetii), this protein is Ferredoxin--NADP reductase 2.